Here is a 210-residue protein sequence, read N- to C-terminus: 7-carboxy-7-deazaguanine synthase (210 aa).

Substrate-binding positions include 25–27 (IQG) and arginine 40. The Radical SAM core domain occupies 31–210 (HTGTAAYFIR…LQTHKYLNIP (180 aa)). Residues cysteine 44, cysteine 48, and cysteine 51 each contribute to the [4Fe-4S] cluster site. A substrate-binding site is contributed by threonine 84. S-adenosyl-L-methionine contacts are provided by residues glycine 86 and 127–129 (SPK). A substrate-binding site is contributed by proline 210.

The protein belongs to the radical SAM superfamily. 7-carboxy-7-deazaguanine synthase family. As to quaternary structure, homodimer. The cofactor is [4Fe-4S] cluster. S-adenosyl-L-methionine is required as a cofactor. Mg(2+) serves as cofactor.

It carries out the reaction 6-carboxy-5,6,7,8-tetrahydropterin + H(+) = 7-carboxy-7-deazaguanine + NH4(+). It functions in the pathway purine metabolism; 7-cyano-7-deazaguanine biosynthesis. Catalyzes the complex heterocyclic radical-mediated conversion of 6-carboxy-5,6,7,8-tetrahydropterin (CPH4) to 7-carboxy-7-deazaguanine (CDG), a step common to the biosynthetic pathways of all 7-deazapurine-containing compounds. This chain is 7-carboxy-7-deazaguanine synthase, found in Flavobacterium psychrophilum (strain ATCC 49511 / DSM 21280 / CIP 103535 / JIP02/86).